A 510-amino-acid chain; its full sequence is Probable cytochrome P450 4d20 (510 aa).

Cys-455 contacts heme.

It belongs to the cytochrome P450 family. The cofactor is heme.

It localises to the endoplasmic reticulum membrane. The protein resides in the microsome membrane. In terms of biological role, may be involved in the metabolism of insect hormones and in the breakdown of synthetic insecticides. The polypeptide is Probable cytochrome P450 4d20 (Cyp4d20) (Drosophila melanogaster (Fruit fly)).